Here is a 417-residue protein sequence, read N- to C-terminus: Putative Bro-N domain-containing protein 289L (417 aa).

The Bro-N domain occupies 4–134 (LINLKDCKEY…VILPSIRKFG (131 aa)). Residues 152–193 (KDKSEQELQFQLKQEREEKENAYIKLRSETKRLKQQIKRTLE) are a coiled coil.

The protein belongs to the IIV-6 201R/289L family.

The protein is Putative Bro-N domain-containing protein 289L of Invertebrate iridescent virus 6 (IIV-6).